The chain runs to 307 residues: Aspartate carbamoyltransferase catalytic subunit (307 aa).

Residues Arg-56 and Thr-57 each coordinate carbamoyl phosphate. Lys-84 is an L-aspartate binding site. Carbamoyl phosphate-binding residues include Arg-106, His-136, and Gln-139. Residues Arg-169 and Arg-221 each contribute to the L-aspartate site. 2 residues coordinate carbamoyl phosphate: Ala-262 and Pro-263.

The protein belongs to the aspartate/ornithine carbamoyltransferase superfamily. ATCase family. As to quaternary structure, heterododecamer (2C3:3R2) of six catalytic PyrB chains organized as two trimers (C3), and six regulatory PyrI chains organized as three dimers (R2).

The enzyme catalyses carbamoyl phosphate + L-aspartate = N-carbamoyl-L-aspartate + phosphate + H(+). Its pathway is pyrimidine metabolism; UMP biosynthesis via de novo pathway; (S)-dihydroorotate from bicarbonate: step 2/3. Its function is as follows. Catalyzes the condensation of carbamoyl phosphate and aspartate to form carbamoyl aspartate and inorganic phosphate, the committed step in the de novo pyrimidine nucleotide biosynthesis pathway. The polypeptide is Aspartate carbamoyltransferase catalytic subunit (Streptococcus pneumoniae (strain 70585)).